The primary structure comprises 467 residues: Geranylgeranyl diphosphate reductase, chloroplastic (467 aa).

Residues Met-1 to Thr-43 constitute a chloroplast transit peptide.

The protein belongs to the geranylgeranyl reductase family. ChlP subfamily. As to quaternary structure, part of the FLU-containing chloroplast membrane complex composed of FLU, CRD1, PORB, PORC, CHLP and HEMA1.

Its subcellular location is the plastid. It localises to the chloroplast membrane. It catalyses the reaction phytyl diphosphate + 3 NADP(+) = geranylgeranyl diphosphate + 3 NADPH + 3 H(+). It participates in porphyrin-containing compound metabolism; chlorophyll biosynthesis. Its pathway is cofactor biosynthesis; tocopherol biosynthesis. Functionally, catalyzes the reduction of geranylgeranyl diphosphate to phytyl diphosphate, providing phytol for both tocopherol and chlorophyll synthesis. In Arabidopsis thaliana (Mouse-ear cress), this protein is Geranylgeranyl diphosphate reductase, chloroplastic (CHLP).